The following is a 208-amino-acid chain: Redox-sensing transcriptional repressor Rex (208 aa).

Positions 16–55 form a DNA-binding region, H-T-H motif; the sequence is LYYRCLSELNEKGEDKVSSAVLERLLKIDAATVRRDFSYF. 90–95 is an NAD(+) binding site; that stretch reads GVGNLG.

It belongs to the transcriptional regulatory Rex family. In terms of assembly, homodimer.

It is found in the cytoplasm. Its function is as follows. Modulates transcription in response to changes in cellular NADH/NAD(+) redox state. The sequence is that of Redox-sensing transcriptional repressor Rex from Pediococcus pentosaceus (strain ATCC 25745 / CCUG 21536 / LMG 10740 / 183-1w).